The primary structure comprises 499 residues: Low-affinity inorganic phosphate transporter PitB (499 aa).

The next 10 helical transmembrane spans lie at 5-25, 52-72, 94-114, 124-144, 155-175, 207-227, 233-253, 382-402, 430-450, and 473-493; these read FVGL…FVLF, LAVV…GLSV, LAMV…TWFF, LIGA…SSVM, IFSS…GLIF, PFWT…SHGA, GIGL…VVNM, APVW…MIGW, AAVS…THVL, and ILMA…GLYW.

Belongs to the inorganic phosphate transporter (PiT) (TC 2.A.20) family. Pit subfamily.

Its subcellular location is the cell inner membrane. It catalyses the reaction phosphate(in) + H(+)(in) = phosphate(out) + H(+)(out). In terms of biological role, low-affinity inorganic phosphate transporter. The sequence is that of Low-affinity inorganic phosphate transporter PitB from Escherichia coli (strain K12).